Consider the following 111-residue polypeptide: Probable 4-amino-4-deoxy-L-arabinose-phosphoundecaprenol flippase subunit ArnE (111 aa).

3 helical membrane passes run 36 to 56, 61 to 81, and 88 to 108; these read IVLW…LWLL, VPVG…TLAA, and PVSP…VILG. The EamA domain maps to 40-109; the sequence is LGLALACIGL…IIGGIVILGS (70 aa).

Belongs to the ArnE family. As to quaternary structure, heterodimer of ArnE and ArnF.

It localises to the cell inner membrane. It participates in bacterial outer membrane biogenesis; lipopolysaccharide biosynthesis. Translocates 4-amino-4-deoxy-L-arabinose-phosphoundecaprenol (alpha-L-Ara4N-phosphoundecaprenol) from the cytoplasmic to the periplasmic side of the inner membrane. This is Probable 4-amino-4-deoxy-L-arabinose-phosphoundecaprenol flippase subunit ArnE from Shigella flexneri serotype 5b (strain 8401).